Here is a 248-residue protein sequence, read N- to C-terminus: 14-3-3 protein (248 aa).

Coiled-coil stretches lie at residues 13 to 33 and 91 to 111; these read MAQL…MRKI and RQKI…LLQE. 135 to 136 serves as a coordination point for O-phospho-L-serine; it reads RY. Thr-214 is subject to Phosphothreonine. The Putative polyglycylation target motif (T/G)X0-1(D/E)X1-3-G(D/E)X1-2(gE)2-4, where X is polar or negatively charged amino acid, and gE is polyglycylated glutamine motif lies at 237 to 248; that stretch reads TDSAGDDNAEEK. Glu-246 carries the post-translational modification 5-glutamyl polyglycine.

The protein belongs to the 14-3-3 family. In terms of assembly, homodimer. Homodimerizes via N-terminal domains. Oligomerizes forming homotrimers, homotetramers and protein filaments. Oligomerization is hindered by polyglycylation in vivo. Interacts with a large number of both cytosolic and membrane proteins in trophozoites and encysting parasites. Interacts with a serine/threonine protein kinase GL50803_112076 (gCDC7). Component of a multiprotein complex containing gCDC7 and GL50803_94117 (gDBF4), a regulatory subunit of gCDC7, during both the trophozoite and encysting stages of the parasite. Interacts with fructose-bisphosphate aldolase GL50803_11043 (gFBA), pyruvate kinase GL50803_17143 (gPyk), acetyl-CoA synthetase GL50803_13608 (gACS), protein kinase GL50803_22165 (gSTE), DEAD box RNA helicase GL50803_34684 (gVASA) and Golgi/cell cycle associated protein GL50803_17472 (gGCCA). Interacts with actin. Interacts with both monomeric phosphorylated and unphosphorylated actin. The interaction is enhanced by phosphorylation of actin and inhibited by Rho GTPase Rac. In terms of processing, phosphorylated constitutively throughout the life cycle. Phosphorylation is very high in trophozoites and encysting cells of 12 hours. Phosphorylated during excystation. Phosphorylation promotes its binding to various target proteins and is critical for encystation process. Phosphorylation modification is not influenced by polyglycylation modification. Polyglycylated on a glutamate residue, resulting in polyglycine chain on the gamma-carboxyl group. Polyglycylated by the tubulin--tyrosine ligase-like protein GL50803_8456 (gTTLL3). The polyglycine chain is shortened by metallopeptidases of the M20 family, namely dipeptidases GL50803_15832 (gDIP1) and GL50803_8407 (gDIP2). The length of the polyglycine chain is developmental stage-dependent. In trophozoites, glycine residues range from 10 to 31, with the greatest occurrence of 21 residues. In 12 hour encystation stage, glycine residues range from 6 to 22, with the greatest occurrence of 10 residues. The differential rate of polyglycylation/deglycylation during the encystation process regulates the intracellular localization of this protein. Relocalizes partially from the cytoplasm inside the nuclei following the shortening of the polyglycine chain in encysting cells. Polyglycylation modification is not influenced by phosphorylation modification. Polyglycylation prevents oligomerization in vivo.

It is found in the cytoplasm. The protein localises to the cytoskeleton. Its subcellular location is the nucleus. The protein resides in the cell projection. It localises to the cilium. It is found in the flagellum. The protein localises to the spindle. Its subcellular location is the nucleus envelope. The protein resides in the endoplasmic reticulum. Functionally, adapter protein implicated in the regulation of a large spectrum of both general and specialized signaling pathways. Binds to a large number of partners, usually by recognition of a phosphoserine or phosphothreonine motif. Binding generally results in the modulation of the activity of the binding partner. Binds with varying affinity to various synthetic phosphopeptides having a consensus binding motif RSX(pS/pT)XP, called mode-1, where X is any residue and pS/pT is a phosphorylated serine/threonine, and to synthetic phosphopeptides having a consensus binding motif Xp(S/T)X1-2-COOH, called mode-3, in which the phosphorylated residue occupies the penultimate C-terminal position in the target protein, but does not bind to their unphosphorylated counterparts. Binds to synthetic human RAF1 phosphopeptides, but not to their unphosphorylated forms. Binds to difopein, a polypeptide containing a phosphorylation-independent binding motif. Involved in encystation. Involved in cell proliferation. Required for actin and tubulin cytoskeletal organization. Regulates actin filament formation and nuclear size. The protein is 14-3-3 protein of Giardia intestinalis (strain ATCC 50803 / WB clone C6) (Giardia lamblia).